A 137-amino-acid polypeptide reads, in one-letter code: Proofreading thioesterase EntH (137 aa).

Glu-63 functions as the Nucleophile or proton acceptor in the catalytic mechanism.

It belongs to the thioesterase PaaI family. Homotetramer. Dimer of dimers. Interacts specifically with the aryl carrier protein (ArCP) domain of EntB.

The protein resides in the cytoplasm. Its pathway is siderophore biosynthesis; enterobactin biosynthesis. Required for optimal enterobactin synthesis. Acts as a proofreading enzyme that prevents EntB misacylation by hydrolyzing the thioester bound existing between EntB and wrongly charged molecules. The chain is Proofreading thioesterase EntH from Shigella sonnei (strain Ss046).